Here is a 199-residue protein sequence, read N- to C-terminus: Protein GrpE (199 aa).

Basic and acidic residues predominate over residues Met1–Asn24. A disordered region spans residues Met1–Glu52.

It belongs to the GrpE family. As to quaternary structure, homodimer.

Its subcellular location is the cytoplasm. Functionally, participates actively in the response to hyperosmotic and heat shock by preventing the aggregation of stress-denatured proteins, in association with DnaK and GrpE. It is the nucleotide exchange factor for DnaK and may function as a thermosensor. Unfolded proteins bind initially to DnaJ; upon interaction with the DnaJ-bound protein, DnaK hydrolyzes its bound ATP, resulting in the formation of a stable complex. GrpE releases ADP from DnaK; ATP binding to DnaK triggers the release of the substrate protein, thus completing the reaction cycle. Several rounds of ATP-dependent interactions between DnaJ, DnaK and GrpE are required for fully efficient folding. This is Protein GrpE from Legionella pneumophila.